Consider the following 394-residue polypeptide: Chalcone synthase 8 (394 aa).

The active site involves Cys165.

The protein belongs to the thiolase-like superfamily. Chalcone/stilbene synthases family.

It catalyses the reaction (E)-4-coumaroyl-CoA + 3 malonyl-CoA + 3 H(+) = 2',4,4',6'-tetrahydroxychalcone + 3 CO2 + 4 CoA. It functions in the pathway secondary metabolite biosynthesis; flavonoid biosynthesis. Functionally, the primary product of this enzyme is 4,2',4',6'-tetrahydroxychalcone (also termed naringenin-chalcone or chalcone) which can under specific conditions spontaneously isomerize into naringenin. This is Chalcone synthase 8 (CHS8) from Bromheadia finlaysoniana (Orchid).